Here is a 396-residue protein sequence, read N- to C-terminus: Probable peptidoglycan glycosyltransferase FtsW (396 aa).

9 helical membrane-spanning segments follow: residues 17 to 37 (FCDG…WVMV), 61 to 81 (VFVL…MAWW), 83 to 103 (ANGP…LVAG), 117 to 137 (GIPL…VYLA), 159 to 179 (MVMA…AVVV), 198 to 218 (FLLL…AEPY), 274 to 294 (FVFA…VIGL), 316 to 336 (FAAY…FINI), and 350 to 370 (LPLL…VGML).

The protein belongs to the SEDS family. FtsW subfamily.

The protein localises to the cell inner membrane. It catalyses the reaction [GlcNAc-(1-&gt;4)-Mur2Ac(oyl-L-Ala-gamma-D-Glu-L-Lys-D-Ala-D-Ala)](n)-di-trans,octa-cis-undecaprenyl diphosphate + beta-D-GlcNAc-(1-&gt;4)-Mur2Ac(oyl-L-Ala-gamma-D-Glu-L-Lys-D-Ala-D-Ala)-di-trans,octa-cis-undecaprenyl diphosphate = [GlcNAc-(1-&gt;4)-Mur2Ac(oyl-L-Ala-gamma-D-Glu-L-Lys-D-Ala-D-Ala)](n+1)-di-trans,octa-cis-undecaprenyl diphosphate + di-trans,octa-cis-undecaprenyl diphosphate + H(+). The protein operates within cell wall biogenesis; peptidoglycan biosynthesis. In terms of biological role, peptidoglycan polymerase that is essential for cell division. This is Probable peptidoglycan glycosyltransferase FtsW from Halomonas elongata (strain ATCC 33173 / DSM 2581 / NBRC 15536 / NCIMB 2198 / 1H9).